The chain runs to 624 residues: Ceramide transfer protein (624 aa).

The span at 1–11 (MSDNQSWNSSG) shows a compositional bias: polar residues. The interval 1–24 (MSDNQSWNSSGSEEDPETESGPPV) is disordered. Residues 23-117 (PVERCGVLSK…WVDAIEQHKT (95 aa)) enclose the PH domain. S126, S132, and S135 each carry phosphoserine. The disordered stretch occupies residues 202 to 221 (DDEDDFPTTRSDGDFLHNTN). Positions 263-303 (IELMVKREESWQKRHDREVEKRRRVEEAYKNVMEELKKKPR) form a coiled coil. S315 carries the post-translational modification Phosphoserine. An FFAT motif is present at residues 321–327 (EFFDAVE). Phosphotyrosine is present on Y372. Phosphoserine is present on residues S373, S377, and S380. Residues 389 to 618 (DVHRFSSQVE…FTSYVQEKTA (230 aa)) enclose the START domain. Residues E472, Q493, N530, and Y579 each coordinate an N-acylsphing-4-enine.

In terms of assembly, interacts with VAPA and VAPB. Interaction with VAPB is less efficient than with VAPA. Interacts (via FFAT motif) with MOSPD2 (via MSP domain). Phosphorylation on Ser-132 decreases the affinity toward phosphatidylinositol 4-phosphate at Golgi membranes and reduces ceramide transfer activity. Inactivated by hyperphosphorylation of serine residues by CSNK1G2/CK1 that triggers dissociation from the Golgi complex, thus down-regulating ER-to-Golgi transport of ceramide and sphingomyelin synthesis.

The protein localises to the cytoplasm. It is found in the golgi apparatus. Its subcellular location is the endoplasmic reticulum. It carries out the reaction N-hexadecanoylsphing-4-enine(in) = N-hexadecanoylsphing-4-enine(out). Its function is as follows. Shelters ceramides and diacylglycerol lipids inside its START domain and mediates the intracellular trafficking of ceramides and diacylglycerol lipids in a non-vesicular manner. This is Ceramide transfer protein (Cert1) from Mus musculus (Mouse).